We begin with the raw amino-acid sequence, 386 residues long: Myosin light chain kinase family member 4 (386 aa).

Serine 100 carries the phosphoserine modification. The Protein kinase domain occupies 107-361; the sequence is VSKSEILGGG…ASEALKHPWL (255 aa). ATP contacts are provided by residues 113–121 and lysine 136; that span reads LGGGRFGQV. Catalysis depends on aspartate 227, which acts as the Proton acceptor.

Belongs to the protein kinase superfamily. CAMK Ser/Thr protein kinase family.

The catalysed reaction is L-seryl-[protein] + ATP = O-phospho-L-seryl-[protein] + ADP + H(+). It catalyses the reaction L-threonyl-[protein] + ATP = O-phospho-L-threonyl-[protein] + ADP + H(+). The sequence is that of Myosin light chain kinase family member 4 (Mylk4) from Mus musculus (Mouse).